The chain runs to 695 residues: Lasso peptide isopeptidase AtxE2 (695 aa).

Positions 1–30 are cleaved as a signal peptide; the sequence is MRSSKIRCPGAIRVGTLVTAFGCLPHVAFA. 2 cysteine pairs are disulfide-bonded: Cys296-Cys301 and Cys354-Cys363. Residue Ser527 is the Nucleophile of the active site. Cys551 and Cys552 are disulfide-bonded. Catalysis depends on charge relay system residues Glu610 and His638.

It localises to the cytoplasm. Its function is as follows. Lasso peptide isopeptidase that specifically hydrolyzes Astexin-2 and Astexin-3, converting them to linear peptides. Has only a few specific contacts with substrates, because it recognizes Astexin knotted structure (principally the loop structure). Its binding to lasso peptides opens them to expose the isopeptide bonds for hydrolysis. In Asticcacaulis excentricus (strain ATCC 15261 / DSM 4724 / KCTC 12464 / NCIMB 9791 / VKM B-1370 / CB 48), this protein is Lasso peptide isopeptidase AtxE2.